Consider the following 198-residue polypeptide: DNA damage response protein D (198 aa).

The tract at residues 124–198 (SAAPTDPAGP…SEAGENTPAA (75 aa)) is disordered. Residues 136–180 (PGTDRAERTAAERTASERATHDRASTERPARPRRSAEPEAVRTED) show a composition bias toward basic and acidic residues.

Appears to contribute to D.radiodurans capacity to survive exposure to ionizing radiation. May play a role in DNA repair and genome reconstitution. This Deinococcus radiodurans (strain ATCC 13939 / DSM 20539 / JCM 16871 / CCUG 27074 / LMG 4051 / NBRC 15346 / NCIMB 9279 / VKM B-1422 / R1) protein is DNA damage response protein D (ddrD).